Consider the following 355-residue polypeptide: Probable GTP 3',8-cyclase (355 aa).

Residues Ala5 to Arg233 form the Radical SAM core domain. Arg14 contacts GTP. [4Fe-4S] cluster contacts are provided by Cys21, Cys25, and Cys28. Residue Lys69 coordinates GTP. Gly73 contributes to the S-adenosyl-L-methionine binding site. Thr97 provides a ligand contact to GTP. Ser121 is an S-adenosyl-L-methionine binding site. Lys157 contributes to the GTP binding site. Cys252 and Cys255 together coordinate [4Fe-4S] cluster. Arg257–Arg259 lines the GTP pocket. A [4Fe-4S] cluster-binding site is contributed by Cys269.

Belongs to the radical SAM superfamily. MoaA family. [4Fe-4S] cluster serves as cofactor.

It carries out the reaction GTP + AH2 + S-adenosyl-L-methionine = (8S)-3',8-cyclo-7,8-dihydroguanosine 5'-triphosphate + 5'-deoxyadenosine + L-methionine + A + H(+). It functions in the pathway cofactor biosynthesis; molybdopterin biosynthesis. In terms of biological role, catalyzes the cyclization of GTP to (8S)-3',8-cyclo-7,8-dihydroguanosine 5'-triphosphate. The chain is Probable GTP 3',8-cyclase from Aeropyrum pernix (strain ATCC 700893 / DSM 11879 / JCM 9820 / NBRC 100138 / K1).